We begin with the raw amino-acid sequence, 332 residues long: 2,3-diketo-L-gulonate reductase (332 aa).

Histidine 44 acts as the Proton donor in catalysis. Residues 168–174 (ITMVDMS), 224–225 (WK), and 304–306 (GHE) contribute to the NAD(+) site.

Belongs to the LDH2/MDH2 oxidoreductase family. DlgD subfamily. In terms of assembly, homodimer.

It is found in the cytoplasm. It catalyses the reaction 3-dehydro-L-gulonate + NAD(+) = 2,3-dioxo-L-gulonate + NADH + H(+). It carries out the reaction 3-dehydro-L-gulonate + NADP(+) = 2,3-dioxo-L-gulonate + NADPH + H(+). Catalyzes the reduction of 2,3-diketo-L-gulonate in the presence of NADH, to form 3-keto-L-gulonate. This Escherichia coli (strain SMS-3-5 / SECEC) protein is 2,3-diketo-L-gulonate reductase.